A 185-amino-acid polypeptide reads, in one-letter code: ATP-dependent protease subunit HslV (185 aa).

The active site involves T13. The Na(+) site is built by G167, C170, and T173.

Belongs to the peptidase T1B family. HslV subfamily. A double ring-shaped homohexamer of HslV is capped on each side by a ring-shaped HslU homohexamer. The assembly of the HslU/HslV complex is dependent on binding of ATP.

It localises to the cytoplasm. It carries out the reaction ATP-dependent cleavage of peptide bonds with broad specificity.. Its activity is regulated as follows. Allosterically activated by HslU binding. In terms of biological role, protease subunit of a proteasome-like degradation complex believed to be a general protein degrading machinery. The protein is ATP-dependent protease subunit HslV of Sinorhizobium medicae (strain WSM419) (Ensifer medicae).